The chain runs to 221 residues: Thiopurine S-methyltransferase (221 aa).

The S-adenosyl-L-methionine site is built by W12, L47, E68, and R125.

This sequence belongs to the class I-like SAM-binding methyltransferase superfamily. TPMT family.

The protein localises to the cytoplasm. The catalysed reaction is S-adenosyl-L-methionine + a thiopurine = S-adenosyl-L-homocysteine + a thiopurine S-methylether.. This chain is Thiopurine S-methyltransferase, found in Legionella pneumophila (strain Paris).